The chain runs to 507 residues: Transcription factor SOX-9 (507 aa).

2 disordered regions span residues 1–67 (MNLL…SEED) and 160–250 (RLRV…AGKV). Low complexity predominate over residues 30 to 41 (SAGSPCPSGSGS). Residues 42–52 (DTENTRPQENT) show a composition bias toward polar residues. Composition is skewed to basic and acidic residues over residues 56–67 (GEPDLKKESEED) and 160–174 (RLRV…DYKY). Residues 63–103 (ESEEDKFPVCIREAVSQVLKGYDWTLVPMPVRVNGSSKNKP) are dimerization (DIM). The tract at residues 63–103 (ESEEDKFPVCIREAVSQVLKGYDWTLVPMPVRVNGSSKNKP) is PQA. A Phosphoserine; by PKA modification is found at serine 64. Residues 105 to 173 (VKRPMNAFMV…QHKKDHPDYK (69 aa)) constitute a DNA-binding region (HMG box). The residue at position 211 (serine 211) is a Phosphoserine; by PKA. The segment at 224-307 (PGEHSGQSQG…LPPNGHPGVP (84 aa)) is transactivation domain (TAM). Short sequence motifs (9aaTAD) lie at residues 275–284 (IGELSSDVIS) and 290–298 (DVNEFDQYL). The tract at residues 335-429 (WMSKQQAPPP…PFNLPHYSPS (95 aa)) is disordered. Positions 341–369 (APPPPPQQPPQAPQAPQAPPQQQAPPQQP) are enriched in pro residues. A compositionally biased stretch (polar residues) spans 378 to 420 (HTLTTLSSEPGQSQRTHIKTEQLSPSHYSEQQQHSPQQISYSP). A transactivation domain (TAC) region spans residues 392 to 507 (RTHIKTEQLS…QPVYTQLTRP (116 aa)). Lysine 396 participates in a covalent cross-link: Glycyl lysine isopeptide (Lys-Gly) (interchain with G-Cter in ubiquitin). The 9aaTAD 3 signature appears at 458-466 (SGLYSTFTY). The interval 477-507 (PIADTSGVPSIPQTHSPQHWEQPVYTQLTRP) is disordered. Polar residues predominate over residues 483–507 (GVPSIPQTHSPQHWEQPVYTQLTRP).

Homodimer; homodimerization is required for activity. Interacts (via C-terminus) with ZNF219; forming a complex that binds to the COL2A1 promoter and activates COL2A1 expression. Interacts with DDRGK1. Interacts with EP300/p300. Interacts with beta-catenin (CTNNB1); inhibiting CTNNB1 activity by competing with the binding sites of TCF/LEF within CTNNB1. Post-translationally, acetylated; acetylation impairs nuclear localization and ability to transactivate expression of target genes. Deacetylated by SIRT1. Phosphorylation at Ser-64 and Ser-211 by PKA increases transcriptional activity and may help delay chondrocyte maturation downstream of PTHLH/PTHrP signaling. Phosphorylation at either Ser-64 or Ser-211 is required for sumoylation, but phosphorylation is not dependent on sumoylation. Phosphorylated on tyrosine residues; tyrosine dephosphorylation by PTPN11/SHP2 blocks SOX9 phosphorylation by PKA and subsequent SUMOylation. In terms of processing, sumoylated; phosphorylation at either Ser-64 or Ser-211 is required for sumoylation. Sumoylation is induced by BMP signaling pathway. Post-translationally, ubiquitinated; ubiquitination leads to proteasomal degradation and is negatively regulated by DDRGK1. In terms of tissue distribution, expressed in the intestinal epithelium (at protein level). Expressed in progenitor cells in various organs, including chondroprogenitors, osteoprogenitors and preadipocytes, but is not expressed in most differentiated cell types such as osteoblasts and adipocytes, with the exception of chondrocytes. Highly expressed in developing chondrogenic tissues. Also expressed in some non-chondrogenic tissues such as notochord, otic vesicle and neural tube.

Its subcellular location is the nucleus. Functionally, transcription factor that plays a key role in chondrocytes differentiation and skeletal development. Specifically binds the 5'-ACAAAG-3' DNA motif present in enhancers and super-enhancers and promotes expression of genes important for chondrogenesis, including cartilage matrix protein-coding genes COL2A1, COL4A2, COL9A1, COL11A2 and ACAN, SOX5 and SOX6. Also binds to some promoter regions. Plays a central role in successive steps of chondrocyte differentiation. Absolutely required for precartilaginous condensation, the first step in chondrogenesis during which skeletal progenitors differentiate into prechondrocytes. Together with SOX5 and SOX6, required for overt chondrogenesis when condensed prechondrocytes differentiate into early stage chondrocytes, the second step in chondrogenesis. Later, required to direct hypertrophic maturation and block osteoblast differentiation of growth plate chondrocytes: maintains chondrocyte columnar proliferation, delays prehypertrophy and then prevents osteoblastic differentiation of chondrocytes by lowering beta-catenin (CTNNB1) signaling and RUNX2 expression. Also required for chondrocyte hypertrophy, both indirectly, by keeping the lineage fate of chondrocytes, and directly, by remaining present in upper hypertrophic cells and transactivating COL10A1 along with MEF2C. Low lipid levels are the main nutritional determinant for chondrogenic commitment of skeletal progenitor cells: when lipids levels are low, FOXO (FOXO1 and FOXO3) transcription factors promote expression of SOX9, which induces chondrogenic commitment and suppresses fatty acid oxidation. Mechanistically, helps, but is not required, to remove epigenetic signatures of transcriptional repression and deposit active promoter and enhancer marks at chondrocyte-specific genes. Acts in cooperation with the Hedgehog pathway-dependent GLI (GLI1 and GLI3) transcription factors. In addition to cartilage development, also acts as a regulator of proliferation and differentiation in epithelial stem/progenitor cells: involved in the lung epithelium during branching morphogenesis, by balancing proliferation and differentiation and regulating the extracellular matrix. Controls epithelial branching during kidney development. The protein is Transcription factor SOX-9 of Mus musculus (Mouse).